An 817-amino-acid polypeptide reads, in one-letter code: Dolichyl-phosphate-mannose--protein mannosyltransferase 1 (817 aa).

S2 bears the N-acetylserine mark. At 2-50 (SEEKTYKRVEQDDPVPELDIKQGPVRPFIVTDPSAELASLRTMVTLKEK) the chain is on the cytoplasmic side. Residues 51–70 (LLVACLAVFTAVIRLHGLAW) form a helical membrane-spanning segment. The Lumenal segment spans residues 71 to 135 (PDSVVFDEVH…DSFPSTTPYV (65 aa)). The chain crosses the membrane as a helical span at residues 136 to 154 (LMRFFSASLGALTVILMYM). Residues 155–179 (TLRYSGVRMWVALMSAICFAVENSY) are Cytoplasmic-facing. The chain crosses the membrane as a helical span at residues 180-200 (VTISRYILLDAPLMFFIAAAV). The Lumenal portion of the chain corresponds to 201–234 (YSFKKYEMYPANSLNAYKSLLATGIALGMASSSK). Residues 235-259 (WVGLFTVTWVGLLCIWRLWFMIGDL) traverse the membrane as a helical segment. At 260–273 (TKSSKSIFKVAFAK) the chain is on the cytoplasmic side. A helical transmembrane segment spans residues 274–291 (LAFLLGVPFALYLVFFYI). Residues 292–584 (HFQSLTLDGD…GENNRNVYLL (293 aa)) are Lumenal-facing. MIR domains are found at residues 324 to 378 (VADV…LELY), 388 to 448 (FQNL…VEID), and 459 to 514 (ERVI…VENN). N-linked (GlcNAc...) asparagine glycosylation is found at N390 and N513. Residues 585-605 (GNAIVWWAVTAFIGIFGLIVI) traverse the membrane as a helical segment. Residues 606–685 (TELFSWQLGK…SYVFRSKRQM (80 aa)) lie on the Cytoplasmic side of the membrane. Residues 686 to 710 (GYAVVITFLAASVYFFKSFSPIIYG) form a helical membrane-spanning segment. Over 711 to 817 (TPWTQELCQK…LKVEKRAVLE (107 aa)) the chain is Lumenal. N743 carries an N-linked (GlcNAc...) asparagine glycan.

It belongs to the glycosyltransferase 39 family. In terms of assembly, PMT1 and PMT2 form a functional heterodimer. The complex interacts with endoplasmic reticulum proteins EMP24, ERV25, ERP1, ERP2, CDC48, HRD1, USA1, YOS9, ERO1, PDI1, UBR1, Cue4, DFM1 and TED1. Forms also a minor complex with PMT3.

Its subcellular location is the endoplasmic reticulum membrane. The enzyme catalyses a di-trans,poly-cis-dolichyl beta-D-mannosyl phosphate + L-seryl-[protein] = 3-O-(alpha-D-mannosyl)-L-seryl-[protein] + a di-trans,poly-cis-dolichyl phosphate + H(+). It catalyses the reaction a di-trans,poly-cis-dolichyl beta-D-mannosyl phosphate + L-threonyl-[protein] = 3-O-(alpha-D-mannosyl)-L-threonyl-[protein] + a di-trans,poly-cis-dolichyl phosphate + H(+). It functions in the pathway protein modification; protein glycosylation. Its function is as follows. Protein O-mannosyltransferase involved in O-glycosylation which is essential for cell wall rigidity. Forms a heterodimeric complex with PMT2 and more rarely with PMT3 to transfer mannose from Dol-P-mannose to Ser or Thr residues on proteins. The PMT1-PMT2 complex participates in oxidative protein folding, ER-associated protein degradation (ERAD), as well as ER export. Required for incorporation of proteins in the cell wall. The sequence is that of Dolichyl-phosphate-mannose--protein mannosyltransferase 1 from Saccharomyces cerevisiae (strain ATCC 204508 / S288c) (Baker's yeast).